A 199-amino-acid chain; its full sequence is Holliday junction branch migration complex subunit RuvA (199 aa).

Positions 1 to 63 (MYEYLTGLVT…EDNISLFGFT (63 aa)) are domain I. The interval 64–142 (DQNEKNLFMQ…NESSSSLFAT (79 aa)) is domain II. Residues 143–149 (TQLTVDA) are flexible linker. The segment at 150-199 (TVNRELKDALEALAALGYKERDIKKVQKALMKEEQMATDEYLRQALRLLN) is domain III.

Belongs to the RuvA family. In terms of assembly, homotetramer. Forms an RuvA(8)-RuvB(12)-Holliday junction (HJ) complex. HJ DNA is sandwiched between 2 RuvA tetramers; dsDNA enters through RuvA and exits via RuvB. An RuvB hexamer assembles on each DNA strand where it exits the tetramer. Each RuvB hexamer is contacted by two RuvA subunits (via domain III) on 2 adjacent RuvB subunits; this complex drives branch migration. In the full resolvosome a probable DNA-RuvA(4)-RuvB(12)-RuvC(2) complex forms which resolves the HJ.

The protein localises to the cytoplasm. In terms of biological role, the RuvA-RuvB-RuvC complex processes Holliday junction (HJ) DNA during genetic recombination and DNA repair, while the RuvA-RuvB complex plays an important role in the rescue of blocked DNA replication forks via replication fork reversal (RFR). RuvA specifically binds to HJ cruciform DNA, conferring on it an open structure. The RuvB hexamer acts as an ATP-dependent pump, pulling dsDNA into and through the RuvAB complex. HJ branch migration allows RuvC to scan DNA until it finds its consensus sequence, where it cleaves and resolves the cruciform DNA. This Limosilactobacillus reuteri subsp. reuteri (strain JCM 1112) (Lactobacillus reuteri) protein is Holliday junction branch migration complex subunit RuvA.